Reading from the N-terminus, the 180-residue chain is Large ribosomal subunit protein uL5 (180 aa).

It belongs to the universal ribosomal protein uL5 family. As to quaternary structure, part of the 50S ribosomal subunit; part of the 5S rRNA/L5/L18/L25 subcomplex. Contacts the 5S rRNA and the P site tRNA. Forms a bridge to the 30S subunit in the 70S ribosome.

This is one of the proteins that bind and probably mediate the attachment of the 5S RNA into the large ribosomal subunit, where it forms part of the central protuberance. In the 70S ribosome it contacts protein S13 of the 30S subunit (bridge B1b), connecting the 2 subunits; this bridge is implicated in subunit movement. Contacts the P site tRNA; the 5S rRNA and some of its associated proteins might help stabilize positioning of ribosome-bound tRNAs. The sequence is that of Large ribosomal subunit protein uL5 from Clostridium botulinum (strain ATCC 19397 / Type A).